Reading from the N-terminus, the 265-residue chain is Mlc titration factor A (265 aa).

Residues histidine 111, histidine 148, histidine 152, and glutamate 211 each contribute to the Zn(2+) site.

It belongs to the MtfA family. Interacts with Mlc. Zn(2+) is required as a cofactor.

It localises to the cytoplasm. In terms of biological role, involved in the modulation of the activity of the glucose-phosphotransferase system (glucose-PTS). Interacts with the transcriptional repressor Mlc, preventing its interaction with DNA and leading to the modulation of expression of genes regulated by Mlc, including ptsG, which encodes the PTS system glucose-specific EIICB component. Its function is as follows. Shows zinc-dependent metallopeptidase activity. In Escherichia coli (strain ATCC 8739 / DSM 1576 / NBRC 3972 / NCIMB 8545 / WDCM 00012 / Crooks), this protein is Mlc titration factor A.